The chain runs to 672 residues: Serine/threonine-protein kinase ppk16 (672 aa).

The 249-residue stretch at 31–279 folds into the Protein kinase domain; the sequence is YRIESVVGEG…IDQIISHPYF (249 aa). ATP contacts are provided by residues 37 to 45 and Lys-60; that span reads VGEGSFGKV. Asp-148 serves as the catalytic Proton acceptor. Ser-231 bears the Phosphoserine mark. Residues 375–384 are compositionally biased toward polar residues; that stretch reads VSVMSNNQDS. 4 disordered regions span residues 375–396, 416–436, 464–572, and 632–672; these read VSVMSNNQDSLKSRHTSSDSSN, DTLSSSAIRPRTPSPSAENYL, NSFG…YSNV, and SGRK…TDLL. Over residues 472–487 the composition is skewed to polar residues; it reads NLPQTTHVDTGEQNTP. Over residues 508 to 523 the composition is skewed to low complexity; sequence SNSQNSPSKSSNLSIN. Over residues 531–541 the composition is skewed to polar residues; that stretch reads LQNTVISPQPT. 2 stretches are compositionally biased toward low complexity: residues 549–572 and 639–649; these read RSLSGRSSVASSRNSSRTRSYSNV and SSSSLMFNQSS.

Belongs to the protein kinase superfamily. Ser/Thr protein kinase family.

The protein resides in the cytoplasm. The catalysed reaction is L-seryl-[protein] + ATP = O-phospho-L-seryl-[protein] + ADP + H(+). The enzyme catalyses L-threonyl-[protein] + ATP = O-phospho-L-threonyl-[protein] + ADP + H(+). Has a role in meiosis. The sequence is that of Serine/threonine-protein kinase ppk16 (ppk16) from Schizosaccharomyces pombe (strain 972 / ATCC 24843) (Fission yeast).